We begin with the raw amino-acid sequence, 342 residues long: L-threonine 3-dehydrogenase (342 aa).

C38 serves as a coordination point for Zn(2+). Catalysis depends on charge relay system residues T40 and H43. Zn(2+) contacts are provided by H63, E64, C93, C96, C99, and C107. NAD(+)-binding positions include I175, D195, R200, L262–L264, and I286–Y287.

Belongs to the zinc-containing alcohol dehydrogenase family. Homotetramer. It depends on Zn(2+) as a cofactor.

It is found in the cytoplasm. It carries out the reaction L-threonine + NAD(+) = (2S)-2-amino-3-oxobutanoate + NADH + H(+). The protein operates within amino-acid degradation; L-threonine degradation via oxydo-reductase pathway; glycine from L-threonine: step 1/2. Catalyzes the NAD(+)-dependent oxidation of L-threonine to 2-amino-3-ketobutyrate. This Streptomyces avermitilis (strain ATCC 31267 / DSM 46492 / JCM 5070 / NBRC 14893 / NCIMB 12804 / NRRL 8165 / MA-4680) protein is L-threonine 3-dehydrogenase.